Reading from the N-terminus, the 154-residue chain is Ascorbate-specific PTS system EIIA component (154 aa).

The PTS EIIA type-2 domain maps to 6–150 (SLAENKSIRL…QEVLDLIDRT (145 aa)). Catalysis depends on histidine 68, which acts as the Tele-phosphohistidine intermediate. At histidine 68 the chain carries Phosphohistidine.

It is found in the cytoplasm. Its function is as follows. The phosphoenolpyruvate-dependent sugar phosphotransferase system (sugar PTS), a major carbohydrate active transport system, catalyzes the phosphorylation of incoming sugar substrates concomitantly with their translocation across the cell membrane. The enzyme II UlaABC PTS system is involved in ascorbate transport. This Shigella boydii serotype 4 (strain Sb227) protein is Ascorbate-specific PTS system EIIA component (ulaC).